Consider the following 276-residue polypeptide: Large ribosomal subunit protein uL2 (276 aa).

Residues 224–254 (VMNPVDHPHGGGEGRTSGGRHPVTPWGVPTK) are disordered.

Belongs to the universal ribosomal protein uL2 family. As to quaternary structure, part of the 50S ribosomal subunit. Forms a bridge to the 30S subunit in the 70S ribosome.

In terms of biological role, one of the primary rRNA binding proteins. Required for association of the 30S and 50S subunits to form the 70S ribosome, for tRNA binding and peptide bond formation. It has been suggested to have peptidyltransferase activity; this is somewhat controversial. Makes several contacts with the 16S rRNA in the 70S ribosome. The polypeptide is Large ribosomal subunit protein uL2 (Gluconobacter oxydans (strain 621H) (Gluconobacter suboxydans)).